Consider the following 247-residue polypeptide: Cell division protein ZapD (247 aa).

Belongs to the ZapD family. As to quaternary structure, interacts with FtsZ.

Its subcellular location is the cytoplasm. Its function is as follows. Cell division factor that enhances FtsZ-ring assembly. Directly interacts with FtsZ and promotes bundling of FtsZ protofilaments, with a reduction in FtsZ GTPase activity. This is Cell division protein ZapD from Cronobacter sakazakii (strain ATCC BAA-894) (Enterobacter sakazakii).